Here is a 911-residue protein sequence, read N- to C-terminus: Protein translocase subunit SecA (911 aa).

Residues glutamine 87, 105–109 (GEGKT), and aspartate 499 each bind ATP. Zn(2+) contacts are provided by cysteine 895, cysteine 897, cysteine 906, and histidine 907.

Belongs to the SecA family. Monomer and homodimer. Part of the essential Sec protein translocation apparatus which comprises SecA, SecYEG and auxiliary proteins SecDF-YajC and YidC. Zn(2+) serves as cofactor.

The protein localises to the cell inner membrane. It is found in the cytoplasm. The catalysed reaction is ATP + H2O + cellular proteinSide 1 = ADP + phosphate + cellular proteinSide 2.. Part of the Sec protein translocase complex. Interacts with the SecYEG preprotein conducting channel. Has a central role in coupling the hydrolysis of ATP to the transfer of proteins into and across the cell membrane, serving both as a receptor for the preprotein-SecB complex and as an ATP-driven molecular motor driving the stepwise translocation of polypeptide chains across the membrane. The chain is Protein translocase subunit SecA from Novosphingobium aromaticivorans (strain ATCC 700278 / DSM 12444 / CCUG 56034 / CIP 105152 / NBRC 16084 / F199).